Consider the following 179-residue polypeptide: Large ribosomal subunit protein uL5 (179 aa).

The protein belongs to the universal ribosomal protein uL5 family. Part of the 50S ribosomal subunit; part of the 5S rRNA/L5/L18/L25 subcomplex. Contacts the 5S rRNA and the P site tRNA. Forms a bridge to the 30S subunit in the 70S ribosome.

This is one of the proteins that bind and probably mediate the attachment of the 5S RNA into the large ribosomal subunit, where it forms part of the central protuberance. In the 70S ribosome it contacts protein S13 of the 30S subunit (bridge B1b), connecting the 2 subunits; this bridge is implicated in subunit movement. Contacts the P site tRNA; the 5S rRNA and some of its associated proteins might help stabilize positioning of ribosome-bound tRNAs. The polypeptide is Large ribosomal subunit protein uL5 (Francisella philomiragia subsp. philomiragia (strain ATCC 25017 / CCUG 19701 / FSC 153 / O#319-036)).